A 350-amino-acid polypeptide reads, in one-letter code: Adenine deaminase (350 aa).

3 residues coordinate Zn(2+): His-24, His-26, and His-207. Glu-210 serves as the catalytic Proton donor. Asp-288 contacts Zn(2+). Substrate is bound at residue Asp-289.

This sequence belongs to the metallo-dependent hydrolases superfamily. Adenosine and AMP deaminases family. Adenine deaminase type 2 subfamily. It depends on Zn(2+) as a cofactor.

The enzyme catalyses adenine + H2O + H(+) = hypoxanthine + NH4(+). Its function is as follows. Catalyzes the hydrolytic deamination of adenine to hypoxanthine. Plays an important role in the purine salvage pathway and in nitrogen catabolism. In Paraburkholderia phytofirmans (strain DSM 17436 / LMG 22146 / PsJN) (Burkholderia phytofirmans), this protein is Adenine deaminase.